A 548-amino-acid polypeptide reads, in one-letter code: 1,3-beta-glucanosyltransferase gel4 (548 aa).

The signal sequence occupies residues 1 to 25; it reads MKFVYAAAGASLVGSALATLPVIEA. Asn51 and Asn69 each carry an N-linked (GlcNAc...) asparagine glycan. The cysteines at positions 88 and 117 are disulfide-linked. Residues Tyr106, 133–141, Asn174, and Glu175 contribute to the (1,3-beta-D-glucosyl)n site; that span reads SAPSESINR. The active-site Proton donor is the Glu175. Residue Asn181 is glycosylated (N-linked (GlcNAc...) asparagine). (1,3-beta-D-glucosyl)n contacts are provided by Asp217 and Arg222. Disulfide bonds link Cys231–Cys364, Cys249–Cys280, Cys386–Cys437, Cys395–Cys461, and Cys414–Cys419. Catalysis depends on Glu277, which acts as the Nucleophile. Tyr309 provides a ligand contact to (1,3-beta-D-glucosyl)n. N-linked (GlcNAc...) asparagine glycosylation occurs at Asn425. Ala519 carries the GPI-like-anchor amidated alanine lipid modification. A propeptide spans 520–548 (removed in mature form); the sequence is SPMAVKVGNWQFGAYIATALFAGVGMLVL.

This sequence belongs to the glycosyl hydrolase 72 family. Post-translationally, the GPI-like anchor contains a phosphoceramide lipid group.

Its subcellular location is the cell membrane. Splits internally a 1,3-beta-glucan molecule and transfers the newly generated reducing end (the donor) to the non-reducing end of another 1,3-beta-glucan molecule (the acceptor) forming a 1,3-beta linkage, resulting in the elongation of 1,3-beta-glucan chains in the cell wall. Involved in cell wall morphogenesis. This chain is 1,3-beta-glucanosyltransferase gel4 (gel4), found in Aspergillus fumigatus (strain ATCC MYA-4609 / CBS 101355 / FGSC A1100 / Af293) (Neosartorya fumigata).